Here is a 1052-residue protein sequence, read N- to C-terminus: Multidrug resistance protein MdtB (1052 aa).

The next 11 membrane-spanning stretches (helical) occupy residues 15 to 37 (LFIL…GIIG), 345 to 362 (FELL…YLFL), 367 to 389 (ATII…MYFL), 396 to 418 (LTLM…VIEN), 438 to 460 (GEIG…PLLF), 472 to 494 (FAVT…TPMM), 535 to 557 (HPWL…YLLI), 867 to 889 (LWLI…ESFI), 909 to 931 (LMLT…IGIV), 968 to 990 (ILMT…GVGA), and 1000 to 1022 (MVGG…YLLF). Positions 1032 to 1052 (KNRHRDEDIDSSELLNGQEPQ) are disordered.

Belongs to the resistance-nodulation-cell division (RND) (TC 2.A.6) family. MdtB subfamily. Part of a tripartite efflux system composed of MdtA, MdtB and MdtC. MdtB forms a heteromultimer with MdtC.

Its subcellular location is the cell inner membrane. The protein is Multidrug resistance protein MdtB of Yersinia pseudotuberculosis serotype I (strain IP32953).